The sequence spans 511 residues: Maturase K (511 aa).

Belongs to the intron maturase 2 family. MatK subfamily.

The protein resides in the plastid. Its subcellular location is the chloroplast. In terms of biological role, usually encoded in the trnK tRNA gene intron. Probably assists in splicing its own and other chloroplast group II introns. This chain is Maturase K, found in Anchomanes difformis (Amorphophallus difformis).